We begin with the raw amino-acid sequence, 449 residues long: Ribosomal protein uS12 methylthiotransferase RimO (449 aa).

An MTTase N-terminal domain is found at 5 to 116; sequence PTIAISHLGC…IVDVVQRVEN (112 aa). Residues Cys-14, Cys-50, Cys-79, Cys-154, Cys-158, and Cys-161 each coordinate [4Fe-4S] cluster. A Radical SAM core domain is found at 140–369; that stretch reads TTTEGVAYLR…MEVQQPISIK (230 aa). A TRAM domain is found at 372–438; sequence QNCIGQTVPV…VYDLYGKTNL (67 aa).

It belongs to the methylthiotransferase family. RimO subfamily. [4Fe-4S] cluster is required as a cofactor.

It is found in the cytoplasm. It carries out the reaction L-aspartate(89)-[ribosomal protein uS12]-hydrogen + (sulfur carrier)-SH + AH2 + 2 S-adenosyl-L-methionine = 3-methylsulfanyl-L-aspartate(89)-[ribosomal protein uS12]-hydrogen + (sulfur carrier)-H + 5'-deoxyadenosine + L-methionine + A + S-adenosyl-L-homocysteine + 2 H(+). Catalyzes the methylthiolation of an aspartic acid residue of ribosomal protein uS12. In Rippkaea orientalis (strain PCC 8801 / RF-1) (Cyanothece sp. (strain PCC 8801)), this protein is Ribosomal protein uS12 methylthiotransferase RimO.